The sequence spans 87 residues: Acylphosphatase (87 aa).

The 86-residue stretch at Arg2–Tyr87 folds into the Acylphosphatase-like domain. Active-site residues include Arg17 and Asn35.

This sequence belongs to the acylphosphatase family.

It catalyses the reaction an acyl phosphate + H2O = a carboxylate + phosphate + H(+). The protein is Acylphosphatase (acyP) of Deinococcus radiodurans (strain ATCC 13939 / DSM 20539 / JCM 16871 / CCUG 27074 / LMG 4051 / NBRC 15346 / NCIMB 9279 / VKM B-1422 / R1).